Here is a 412-residue protein sequence, read N- to C-terminus: Heat stress transcription factor A-3 (412 aa).

A DNA-binding region spans residues I53–S147. Positions R144–G170 are disordered. Residues P148–T166 show a composition bias toward low complexity. Residues S159 to F225 form a hydrophobic repeat HR-A/B region. Residues T166 to L224 are a coiled coil. Residues K238–K254 carry the Bipartite nuclear localization signal motif. An AHA1 motif is present at residues D277–D286. The AHA2 motif lies at D381–G390.

The protein belongs to the HSF family. Class A subfamily. Homotrimer. Post-translationally, exhibits temperature-dependent phosphorylation.

The protein resides in the nucleus. Transcriptional activator that specifically binds DNA sequence 5'-AGAAnnTTCT-3' known as heat shock promoter elements (HSE). Involved in heat stress response. Activated by DREB2A under heat stress. This Arabidopsis thaliana (Mouse-ear cress) protein is Heat stress transcription factor A-3 (HSFA3).